The following is a 289-amino-acid chain: Probable 2-keto-3-deoxyxylonate dehydratase (289 aa).

The Mg(2+) site is built by Glu-144, Glu-146, and Asp-164.

Belongs to the FAH family.

The catalysed reaction is 2-dehydro-3-deoxy-D-arabinonate = 2,5-dioxopentanoate + H2O. Its pathway is carbohydrate metabolism; D-xylose degradation. Functionally, probable 2-keto-3-deoxyxylonate dehydratase involved in the degradation of D-xylose, a major component of hemicelluloses such as xylan. Catalyzes the fourth reaction in the xylose utilization pathway through dehydratation of 2-dehydro-3-deoxy-D-xylonate into alpha-ketoglutarate semialdehyde (2,5-dioxopentanoate). The chain is Probable 2-keto-3-deoxyxylonate dehydratase from Haloferax volcanii (strain ATCC 29605 / DSM 3757 / JCM 8879 / NBRC 14742 / NCIMB 2012 / VKM B-1768 / DS2) (Halobacterium volcanii).